A 262-amino-acid chain; its full sequence is Taurine import ATP-binding protein TauB (262 aa).

The 230-residue stretch at 4-233 (LELERISAQY…RYAAGESARA (230 aa)) folds into the ABC transporter domain. 38 to 45 (GPSGSGKT) contacts ATP.

The protein belongs to the ABC transporter superfamily. Taurine importer (TC 3.A.1.17.1) family. The complex is composed of two ATP-binding proteins (TauB), two transmembrane proteins (TauC) and a solute-binding protein (TauA).

It is found in the cell inner membrane. It carries out the reaction taurine(out) + ATP + H2O = taurine(in) + ADP + phosphate + H(+). In terms of biological role, part of the ABC transporter complex TauABC involved in taurine import. Responsible for energy coupling to the transport system. The sequence is that of Taurine import ATP-binding protein TauB from Pseudomonas putida (Arthrobacter siderocapsulatus).